Consider the following 497-residue polypeptide: Glycine receptor subunit beta (497 aa).

A signal peptide spans 1–22; the sequence is MKFLLTTAFLILISLWVEEAYS. At 23 to 268 the chain is on the extracellular side; the sequence is KEKSSKKGKG…IFTLRRQVGF (246 aa). N-linked (GlcNAc...) asparagine glycosylation occurs at Asn54. 2 residues coordinate glycine: Arg108 and Ser174. Cys183 and Cys197 are oxidised to a cystine. An N-linked (GlcNAc...) asparagine glycan is attached at Asn242. Cysteines 243 and 255 form a disulfide. Thr250 is a binding site for glycine. Residues 269–289 traverse the membrane as a helical segment; the sequence is YMMGVYAPTLLIVVLSWLSFW. Residues 290-294 are Cytoplasmic-facing; it reads INPDA. Residues 295–315 form a helical membrane-spanning segment; that stretch reads SAARVPLGIFSVLSLASECTT. Topologically, residues 316–327 are extracellular; sequence LAAELPKVSYVK. A helical transmembrane segment spans residues 328–349; sequence ALDVWLIACLLFGFASLVEYAV. The Cytoplasmic portion of the chain corresponds to 350–472; that stretch reads VQVMLNNPKR…KPVIPTAAKR (123 aa). The residue at position 391 (Thr391) is a Phosphothreonine. The helical transmembrane segment at 473 to 496 threads the bilayer; it reads IDLYARALFPFCFLFFNVIYWSIY.

The protein belongs to the ligand-gated ion channel (TC 1.A.9) family. Glycine receptor (TC 1.A.9.3) subfamily. GLRB sub-subfamily. In terms of assembly, forms heteropentamers with glycin receptor alpha subunits. Heteropentamers with GLRA1 can be composed of two GLRA1 and three GLRB subunits, or three GLRA1 and two GLRB subunits, or four GLRA1 subunits and one GLRB subunit. Forms heteropentamers with GLRA2. Functional GLRB-GLRA2 heteropentamers contain four GLRA2 subunits and one GLRB subunit, although alternative subunit composition cannot be excluded. Forms a heteropentamer with GLRA3. Interacts with GPHN.

The protein localises to the postsynaptic cell membrane. The protein resides in the synapse. Its subcellular location is the cell projection. It is found in the dendrite. It localises to the cell membrane. The protein localises to the cytoplasm. The enzyme catalyses chloride(in) = chloride(out). Its activity is regulated as follows. Channel opening is triggered by extracellular glycine. Heteropentameric channels composed of GLRB and GLRA1 are activated by lower glycine levels than homopentameric GLRA1. Its function is as follows. Subunit of heteromeric glycine-gated chloride channels. Plays an important role in the down-regulation of neuronal excitability. Contributes to the generation of inhibitory postsynaptic currents. This chain is Glycine receptor subunit beta (GLRB), found in Homo sapiens (Human).